We begin with the raw amino-acid sequence, 71 residues long: ATP synthase F(0) complex subunit e, mitochondrial (71 aa).

Position 34 is an N6-acetyllysine (K34). S68 bears the Phosphoserine mark.

Belongs to the ATPase e subunit family. As to quaternary structure, component of the ATP synthase complex composed at least of ATP5F1A/subunit alpha, ATP5F1B/subunit beta, ATP5MC1/subunit c (homooctomer), MT-ATP6/subunit a, MT-ATP8/subunit 8, ATP5ME/subunit e, ATP5MF/subunit f, ATP5MG/subunit g, ATP5MK/subunit k, ATP5MJ/subunit j, ATP5F1C/subunit gamma, ATP5F1D/subunit delta, ATP5F1E/subunit epsilon, ATP5PF/subunit F6, ATP5PB/subunit b, ATP5PD/subunit d, ATP5PO/subunit OSCP. ATP synthase complex consists of a soluble F(1) head domain (subunits alpha(3) and beta(3)) - the catalytic core - and a membrane F(0) domain - the membrane proton channel (subunits c, a, 8, e, f, g, k and j). These two domains are linked by a central stalk (subunits gamma, delta, and epsilon) rotating inside the F1 region and a stationary peripheral stalk (subunits F6, b, d, and OSCP).

The protein resides in the mitochondrion. Its subcellular location is the mitochondrion inner membrane. Functionally, subunit e, of the mitochondrial membrane ATP synthase complex (F(1)F(0) ATP synthase or Complex V) that produces ATP from ADP in the presence of a proton gradient across the membrane which is generated by electron transport complexes of the respiratory chain. ATP synthase complex consist of a soluble F(1) head domain - the catalytic core - and a membrane F(1) domain - the membrane proton channel. These two domains are linked by a central stalk rotating inside the F(1) region and a stationary peripheral stalk. During catalysis, ATP synthesis in the catalytic domain of F(1) is coupled via a rotary mechanism of the central stalk subunits to proton translocation. In vivo, can only synthesize ATP although its ATP hydrolase activity can be activated artificially in vitro. Part of the complex F(0) domain. The sequence is that of ATP synthase F(0) complex subunit e, mitochondrial from Sus scrofa (Pig).